A 143-amino-acid chain; its full sequence is Large ribosomal subunit protein uL11 (143 aa).

The protein belongs to the universal ribosomal protein uL11 family. As to quaternary structure, part of the ribosomal stalk of the 50S ribosomal subunit. Interacts with L10 and the large rRNA to form the base of the stalk. L10 forms an elongated spine to which L12 dimers bind in a sequential fashion forming a multimeric L10(L12)X complex. One or more lysine residues are methylated.

Functionally, forms part of the ribosomal stalk which helps the ribosome interact with GTP-bound translation factors. The sequence is that of Large ribosomal subunit protein uL11 from Ralstonia pickettii (strain 12J).